The primary structure comprises 109 residues: Elongin-C (109 aa).

It belongs to the SKP1 family.

Its subcellular location is the nucleus. In terms of biological role, SIII, also known as elongin, is a general transcription elongation factor that increases the RNA polymerase II transcription elongation past template-encoded arresting sites. Subunit A is transcriptionally active and its transcription activity is strongly enhanced by binding to the dimeric complex of the SIII regulatory subunits B and C (elongin BC complex). The elongin BC complex seems to be involved as an adapter protein in the proteasomal degradation of target proteins via different E3 ubiquitin ligase complexes. This Dictyostelium discoideum (Social amoeba) protein is Elongin-C (tceb1).